We begin with the raw amino-acid sequence, 122 residues long: UPF0145 protein BceJ2315_57450 (122 aa).

Belongs to the UPF0145 family.

The chain is UPF0145 protein BceJ2315_57450 from Burkholderia cenocepacia (strain ATCC BAA-245 / DSM 16553 / LMG 16656 / NCTC 13227 / J2315 / CF5610) (Burkholderia cepacia (strain J2315)).